The following is a 190-amino-acid chain: Fe/S biogenesis protein NfuA (190 aa).

The [4Fe-4S] cluster site is built by Cys-148 and Cys-151.

Belongs to the NfuA family. Homodimer. [4Fe-4S] cluster is required as a cofactor.

Functionally, involved in iron-sulfur cluster biogenesis. Binds a 4Fe-4S cluster, can transfer this cluster to apoproteins, and thereby intervenes in the maturation of Fe/S proteins. Could also act as a scaffold/chaperone for damaged Fe/S proteins. The polypeptide is Fe/S biogenesis protein NfuA (Baumannia cicadellinicola subsp. Homalodisca coagulata).